Reading from the N-terminus, the 185-residue chain is Peptide deformylase (185 aa).

Residues cysteine 112 and histidine 155 each contribute to the Fe cation site. The active site involves glutamate 156. Residue histidine 159 coordinates Fe cation.

This sequence belongs to the polypeptide deformylase family. Fe(2+) serves as cofactor.

The catalysed reaction is N-terminal N-formyl-L-methionyl-[peptide] + H2O = N-terminal L-methionyl-[peptide] + formate. Its function is as follows. Removes the formyl group from the N-terminal Met of newly synthesized proteins. Requires at least a dipeptide for an efficient rate of reaction. N-terminal L-methionine is a prerequisite for activity but the enzyme has broad specificity at other positions. The protein is Peptide deformylase of Latilactobacillus sakei subsp. sakei (strain 23K) (Lactobacillus sakei subsp. sakei).